The chain runs to 551 residues: MFS-type transporter ATEG_00331 (551 aa).

The signal sequence occupies residues 1 to 18 (MKAWLLVSSLCLSTFIAA). A run of 4 helical transmembrane segments spans residues 40–60 (LEFTWIGTAYLLPAAASTPPW), 71–91 (PVLMISIVVFFIGSLIGALAI), 102–122 (IQGTGGGGILGLSATVIGDVF), and 132–152 (GVLGVTWGVACGLGPIVGGAF). Asn-165 and Asn-178 each carry an N-linked (GlcNAc...) asparagine glycan. Helical transmembrane passes span 179-199 (LTTSVPVAGVAGALVLLFLEV), 206-228 (IIEGLLAMDWLGTITIVGATVMF), 233-255 (GYGGIAYPWNSATVVCLIVFGIG), 324-344 (VYLLPVAVTLCVASTATGLYI), 354-374 (IYFGLVMMILGHGLYINLQPY), 380-400 (IIIFQIIAGLGLGPLFQAPII), 417-437 (TVFFARDIATAMSIVFGGVIF), and 493-513 (SEWIFYTALSGAALLLSVFIS). Residue Asn-524 is glycosylated (N-linked (GlcNAc...) asparagine).

This sequence belongs to the major facilitator superfamily. TCR/Tet family.

It localises to the membrane. Functionally, MFS-type transporter; part of the gene cluster that mediates the biosynthesis of isoflavipucine. In Aspergillus terreus (strain NIH 2624 / FGSC A1156), this protein is MFS-type transporter ATEG_00331.